The primary structure comprises 607 residues: Proteasome-associated ATPase (607 aa).

A compositionally biased stretch (basic and acidic residues) spans 1-17; it reads MTESDRHDTPKGDRRIS. Residues 1 to 65 form a disordered region; it reads MTESDRHDTP…GRPAADNKEL (65 aa). The stretch at 59–102 forms a coiled coil; sequence AADNKELQERVDNLTARNAKLLDTLKDARQQLVALREEVDRLGQ. Residue 294–299 participates in ATP binding; that stretch reads GCGKTL. The tract at residues 606–607 is docks into pockets in the proteasome alpha-ring; sequence YL.

Belongs to the AAA ATPase family. Homohexamer. Assembles into a hexameric ring structure that caps the 20S proteasome core. Strongly interacts with the prokaryotic ubiquitin-like protein Pup through a hydrophobic interface; the interacting region of ARC lies in its N-terminal coiled-coil domain. There is one Pup binding site per ARC hexamer ring. Upon ATP-binding, the C-terminus of ARC interacts with the alpha-rings of the proteasome core, possibly by binding to the intersubunit pockets.

It functions in the pathway protein degradation; proteasomal Pup-dependent pathway. In terms of biological role, ATPase which is responsible for recognizing, binding, unfolding and translocation of pupylated proteins into the bacterial 20S proteasome core particle. May be essential for opening the gate of the 20S proteasome via an interaction with its C-terminus, thereby allowing substrate entry and access to the site of proteolysis. Thus, the C-termini of the proteasomal ATPase may function like a 'key in a lock' to induce gate opening and therefore regulate proteolysis. This is Proteasome-associated ATPase from Gordonia bronchialis (strain ATCC 25592 / DSM 43247 / BCRC 13721 / JCM 3198 / KCTC 3076 / NBRC 16047 / NCTC 10667) (Rhodococcus bronchialis).